Here is a 401-residue protein sequence, read N- to C-terminus: Subtilisin-like protease 7 (401 aa).

A signal peptide spans 1 to 20; the sequence is MGFITKAIPLALAAASVING. Residues 21–119 constitute a propeptide that is removed on maturation; the sequence is AEILETRAGV…IERDARVQIN (99 aa). An Inhibitor I9 domain is found at 36–118; that stretch reads KYIVVMNDGM…YIERDARVQI (83 aa). N-linked (GlcNAc...) asparagine glycosylation occurs at N58. The 273-residue stretch at 129–401 folds into the Peptidase S8 domain; that stretch reads SWGLARVGSR…SKLINNGSGM (273 aa). Catalysis depends on charge relay system residues D161 and H193. N-linked (GlcNAc...) asparagine glycosylation is found at N223 and N253. S347 acts as the Charge relay system in catalysis. The N-linked (GlcNAc...) asparagine glycan is linked to N397.

It belongs to the peptidase S8 family.

The protein resides in the secreted. In terms of biological role, secreted subtilisin-like serine protease with keratinolytic activity that contributes to pathogenicity. The chain is Subtilisin-like protease 7 (SUB7) from Trichophyton equinum (Horse ringworm fungus).